We begin with the raw amino-acid sequence, 472 residues long: ATP-dependent rRNA helicase rrp3 (472 aa).

The segment at 1–52 is disordered; it reads MPAIKKRKIAREAPQQEDHSDSEAHSSASEDAAPNTTEQEQEPSEAPKQAPK. Residues 10–24 are compositionally biased toward basic and acidic residues; the sequence is AREAPQQEDHSDSEA. The Q motif motif lies at 52 to 80; the sequence is KSFKELGLIEQLCEACDSMGYKAPTAIQA. Residues 83 to 254 form the Helicase ATP-binding domain; it reads IPLALQGRDL…RASLQNPLRV (172 aa). ATP is bound at residue 96–103; the sequence is AETGSGKT. The DEAD box motif lies at 202-205; sequence DEAD. A Helicase C-terminal domain is found at 282 to 426; that stretch reads YLVYLLNEFV…EYPAEKDEVM (145 aa). The tract at residues 443–472 is disordered; that stretch reads MKNYDEKKGSRGKKFAKGKRSREDMDQEEG. Positions 452-462 are enriched in basic residues; the sequence is SRGKKFAKGKR.

The protein belongs to the DEAD box helicase family. DDX47/RRP3 subfamily. Interacts with the SSU processome.

It is found in the nucleus. The catalysed reaction is ATP + H2O = ADP + phosphate + H(+). ATP-dependent rRNA helicase required for pre-ribosomal RNA processing. Involved in the maturation of the 35S-pre-rRNA and to its cleavage to mature 18S rRNA. The sequence is that of ATP-dependent rRNA helicase rrp3 from Aspergillus oryzae (strain ATCC 42149 / RIB 40) (Yellow koji mold).